The sequence spans 1235 residues: N-acetylglucosamine-1-phosphotransferase subunits alpha/beta (1235 aa).

Residues 22-42 (VCFVGVVVTIVSAFQFGEVVL) traverse the membrane as a helical segment. 4 N-linked (GlcNAc...) asparagine glycosylation sites follow: Asn83, Asn114, Asn148, and Asn179. Disulfide bonds link Cys438-Cys461, Cys452-Cys468, Cys505-Cys528, and Cys519-Cys535. LNR repeat units lie at residues 438–473 (CAEGCPGSWIKDGYCDKACNNSACDWDGGDCSGNTA) and 505–545 (CNQG…ELYK). The Ca(2+) site is built by Asp449, Asp464, Asp467, Asp516, Asp531, and Asp534. N-linked (GlcNAc...) asparagine glycosylation is found at Asn614 and Asn729. The DMAP1-binding domain occupies 699-823 (NISLLPKEAQ…AQPTLGVTVS (125 aa)). Disordered regions lie at residues 751 to 783 (QARTDETKGNLEVPQENPSHRRPHGFAGEHRSE) and 830 to 850 (LIVPPESHLPKEEESDRAEGN). Over residues 837–848 (HLPKEEESDRAE) the composition is skewed to basic and acidic residues. In terms of domain architecture, EF-hand spans 984-1019 (VQPLNISQVFHEVDTDQSGVLSDREIRTLATRIHDL). N-linked (GlcNAc...) asparagine glycosylation is present at Asn988. Positions 997, 999, 1001, and 1008 each coordinate Ca(2+). Asn1108 carries N-linked (GlcNAc...) asparagine glycosylation. The helical transmembrane segment at 1194–1214 (VLATLIIFTIFSFFAEQIIAL) threads the bilayer.

Belongs to the stealth family. In terms of assembly, hexamer of two alpha, two beta and two gamma (GNPTG) subunits; disulfide-linked. The alpha and/or the beta subunits of the enzyme constitute the catalytic subunits. Interacts with LYSET; facilitates proper localization of GNPTAB. Post-translationally, the alpha- and beta-subunits are generated by a proteolytic cleavage by MBTPS1 protease at the Lys-907-Asp-908 bond.

Its subcellular location is the golgi apparatus membrane. The catalysed reaction is N(4)-[alpha-D-mannosyl-(1-&gt;2)-alpha-D-mannosyl-(glycan)]-L-asparaginyl-[protein] + UDP-N-acetyl-alpha-D-glucosamine = N(4)-[6-(N-acetyl-alpha-D-glucosaminyl-1-phospho)-alpha-D-mannosyl-(1-&gt;2)-alpha-D-mannosyl-(glycan)]-L-asparaginyl-[protein] + UMP + H(+). Catalyzes the formation of mannose 6-phosphate (M6P) markers on high mannose type oligosaccharides in the Golgi apparatus. M6P residues are required to bind to the M6P receptors (MPR), which mediate the vesicular transport of lysosomal enzymes to the endosomal/prelysosomal compartment. The sequence is that of N-acetylglucosamine-1-phosphotransferase subunits alpha/beta (Gnptab) from Mus musculus (Mouse).